The chain runs to 136 residues: Secreted RxLR effector protein 15 (136 aa).

Residues 1 to 22 (MRGHSALMMAVVTLAAVSSGAA) form the signal peptide. Positions 47–50 (RLLR) match the RxLR motif.

It belongs to the RxLR effector family.

Its subcellular location is the secreted. The protein resides in the host nucleus. It is found in the host cytoplasm. Functionally, effector that completely suppresses the host cell death induced by cell death-inducing proteins. The polypeptide is Secreted RxLR effector protein 15 (Plasmopara viticola (Downy mildew of grapevine)).